The primary structure comprises 366 residues: Polyprenyl transferase ausN (366 aa).

8 consecutive transmembrane segments (helical) span residues 97–117, 121–141, 164–184, 215–235, 239–259, 287–307, 308–328, and 346–366; these read VVGI…DLLL, LLLT…NDLI, LPTA…LFLF, LILV…GVEP, ILSS…IDLV, LAYS…LLGG, LRAP…WTFL, and SCLM…AVRV.

This sequence belongs to the UbiA prenyltransferase family. Requires Mg(2+) as cofactor.

It localises to the membrane. The enzyme catalyses 3,5-dimethylorsellinate + (2E,6E)-farnesyl diphosphate = (3R)-3-farnesyl-6-hydroxy-2,3,5-trimethyl-4-oxocyclohexa-1,5-diene-1-carboxylate + diphosphate + H(+). Its pathway is secondary metabolite biosynthesis; terpenoid biosynthesis. Polyprenyl transferase; part of the gene cluster that mediates the biosynthesis of calidodehydroaustin, a fungal meroterpenoid. The first step of the pathway is the synthesis of 3,5-dimethylorsellinic acid by the polyketide synthase ausA. 3,5-dimethylorsellinic acid is then prenylated by the polyprenyl transferase ausN. Further epoxidation by the FAD-dependent monooxygenase ausM and cyclization by the probable terpene cyclase ausL lead to the formation of protoaustinoid A. Protoaustinoid A is then oxidized to spiro-lactone preaustinoid A3 by the combined action of the FAD-binding monooxygenases ausB and ausC, and the dioxygenase ausE. Acid-catalyzed keto-rearrangement and ring contraction of the tetraketide portion of preaustinoid A3 by ausJ lead to the formation of preaustinoid A4. The aldo-keto reductase ausK, with the help of ausH, is involved in the next step by transforming preaustinoid A4 into isoaustinone which is in turn hydroxylated by the P450 monooxygenase ausI to form austinolide. The cytochrome P450 monooxygenase ausG modifies austinolide to austinol. Austinol is further acetylated to austin by the O-acetyltransferase ausP, which spontaneously changes to dehydroaustin. The cytochrome P450 monooxygenase ausR then converts dehydroaustin is into 7-dehydrodehydroaustin. The hydroxylation catalyzed by ausR permits the O-acetyltransferase ausQ to add an additional acetyl group to the molecule, leading to the formation of acetoxydehydroaustin. The short chain dehydrogenase ausT catalyzes the reduction of the double bond present between carbon atoms 1 and 2 to convert 7-dehydrodehydroaustin into 1,2-dihydro-7-hydroxydehydroaustin. AusQ catalyzes not only an acetylation reaction but also the addition of the PKS ausV diketide product to 1,2-dihydro-7-hydroxydehydroaustin, forming precalidodehydroaustin. Finally, the iron/alpha-ketoglutarate-dependent dioxygenase converts precalidodehydroaustin into calidodehydroaustin. The sequence is that of Polyprenyl transferase ausN from Aspergillus calidoustus.